The sequence spans 186 residues: Serine hydrolase RBBP9 (186 aa).

The tract at residues 63–67 is involved in binding to RB1; it reads LHCDE. Catalysis depends on charge relay system residues S75, D138, and H165.

Belongs to the RBBP9 family. Interacts with RB1; the interaction disrupts RB1 binding to E2F1. Interacts with RBL1 and RBL2. As to expression, expressed at higher levels in tumor tissues such as carcinoma.

The catalysed reaction is valacyclovir + H2O = acyclovir + L-valine + H(+). Its activity is regulated as follows. Inhibited by the natural product emetine produced by the ipecac root. In terms of biological role, serine hydrolase. Catalyzes the hydrolytic activation of amino acid ester of the antiviral prodrug valacyclovir to its corresponding active drug, acyclovir. May negatively regulate basal or autocrine TGF-beta signaling by suppressing SMAD2-SMAD3 phosphorylation. May play a role in the transformation process due to its capacity to confer resistance to the growth-inhibitory effects of TGF-beta through interaction with RB1 and the subsequent displacement of E2F1. In Homo sapiens (Human), this protein is Serine hydrolase RBBP9.